Here is a 694-residue protein sequence, read N- to C-terminus: Elongation factor G (694 aa).

The region spanning 9-288 is the tr-type G domain; it reads DAIRNIGIMA…VIVKWLPSPL (280 aa). GTP contacts are provided by residues 18–25, 82–86, and 136–139; these read AHIDAGKT, DTPGH, and NKMD.

It belongs to the TRAFAC class translation factor GTPase superfamily. Classic translation factor GTPase family. EF-G/EF-2 subfamily.

Its subcellular location is the cytoplasm. In terms of biological role, catalyzes the GTP-dependent ribosomal translocation step during translation elongation. During this step, the ribosome changes from the pre-translocational (PRE) to the post-translocational (POST) state as the newly formed A-site-bound peptidyl-tRNA and P-site-bound deacylated tRNA move to the P and E sites, respectively. Catalyzes the coordinated movement of the two tRNA molecules, the mRNA and conformational changes in the ribosome. This Chlamydia trachomatis serovar L2 (strain ATCC VR-902B / DSM 19102 / 434/Bu) protein is Elongation factor G.